The primary structure comprises 363 residues: Uroporphyrinogen decarboxylase (363 aa).

Substrate contacts are provided by residues 27 to 31, aspartate 77, tyrosine 157, threonine 212, and histidine 333; that span reads RQAGR.

The protein belongs to the uroporphyrinogen decarboxylase family. As to quaternary structure, homodimer.

It is found in the cytoplasm. It catalyses the reaction uroporphyrinogen III + 4 H(+) = coproporphyrinogen III + 4 CO2. Its pathway is porphyrin-containing compound metabolism; protoporphyrin-IX biosynthesis; coproporphyrinogen-III from 5-aminolevulinate: step 4/4. Functionally, catalyzes the decarboxylation of four acetate groups of uroporphyrinogen-III to yield coproporphyrinogen-III. The polypeptide is Uroporphyrinogen decarboxylase (Cupriavidus pinatubonensis (strain JMP 134 / LMG 1197) (Cupriavidus necator (strain JMP 134))).